Consider the following 520-residue polypeptide: Nonsense-mediated mRNA decay factor SMG9 (520 aa).

The disordered stretch occupies residues 1 to 143; that stretch reads MSESGHSQPG…KGEKEGQRPT (143 aa). Position 2 is an N-acetylserine (serine 2). A phosphoserine mark is found at serine 2, serine 4, serine 7, serine 32, and serine 53. Basic and acidic residues predominate over residues 36–53; sequence GRERDYIAPWERERRDGS. 2 stretches are compositionally biased toward pro residues: residues 78-94 and 122-133; these read QPPPSTAPAAPPAPAPL and TAPPPPTAPAPP. Serine 451 is modified (phosphoserine).

It belongs to the SMG9 family. Self-associates to form homodimers and forms heterodimers with SMG8; these assembly forms may represent SMG1C intermediate forms. Component of the SMG1C complex composed of SMG1, SMG8 and SMG9. Interacts with DHX34; the interaction is RNA-independent. In terms of processing, phosphorylated by SMG1.

In terms of biological role, involved in nonsense-mediated decay (NMD) of mRNAs containing premature stop codons. Is recruited by release factors to stalled ribosomes together with SMG1 and SMG8 (forming the SMG1C protein kinase complex) and, in the SMG1C complex, is required for the efficient association between SMG1 and SMG8. Plays a role in brain, heart, and eye development. In Mus musculus (Mouse), this protein is Nonsense-mediated mRNA decay factor SMG9.